Reading from the N-terminus, the 253-residue chain is Indole-3-glycerol phosphate synthase (253 aa).

The protein belongs to the TrpC family.

The catalysed reaction is 1-(2-carboxyphenylamino)-1-deoxy-D-ribulose 5-phosphate + H(+) = (1S,2R)-1-C-(indol-3-yl)glycerol 3-phosphate + CO2 + H2O. Its pathway is amino-acid biosynthesis; L-tryptophan biosynthesis; L-tryptophan from chorismate: step 4/5. The polypeptide is Indole-3-glycerol phosphate synthase (Bacillus cereus (strain G9842)).